Here is a 451-residue protein sequence, read N- to C-terminus: Probable gamma-glutamyl phosphate reductase (451 aa).

This sequence belongs to the gamma-glutamyl phosphate reductase family.

The catalysed reaction is L-glutamate 5-semialdehyde + phosphate + NADP(+) = L-glutamyl 5-phosphate + NADPH + H(+). Its pathway is amino-acid biosynthesis; L-proline biosynthesis; L-glutamate 5-semialdehyde from L-glutamate: step 2/2. Functionally, catalyzes the NADPH dependent reduction of L-gamma-glutamyl 5-phosphate into L-glutamate 5-semialdehyde and phosphate. The product spontaneously undergoes cyclization to form 1-pyrroline-5-carboxylate. The sequence is that of Probable gamma-glutamyl phosphate reductase (pro1) from Schizosaccharomyces pombe (strain 972 / ATCC 24843) (Fission yeast).